A 259-amino-acid chain; its full sequence is Flagellar L-ring protein (259 aa).

An N-terminal signal peptide occupies residues 1–15 (MKRISLIALVTIMSG). A lipid anchor (N-palmitoyl cysteine) is attached at cysteine 16. Cysteine 16 carries the S-diacylglycerol cysteine lipid modification.

The protein belongs to the FlgH family. As to quaternary structure, the basal body constitutes a major portion of the flagellar organelle and consists of four rings (L,P,S, and M) mounted on a central rod.

The protein localises to the cell outer membrane. The protein resides in the bacterial flagellum basal body. Its function is as follows. Assembles around the rod to form the L-ring and probably protects the motor/basal body from shearing forces during rotation. The chain is Flagellar L-ring protein from Vibrio vulnificus (strain CMCP6).